Here is a 208-residue protein sequence, read N- to C-terminus: Dephospho-CoA kinase (208 aa).

The 197-residue stretch at 5–201 folds into the DPCK domain; that stretch reads IVALTGGIGS…QRYLALAASA (197 aa). An ATP-binding site is contributed by 13 to 18; sequence GSGKST.

The protein belongs to the CoaE family.

Its subcellular location is the cytoplasm. The enzyme catalyses 3'-dephospho-CoA + ATP = ADP + CoA + H(+). Its pathway is cofactor biosynthesis; coenzyme A biosynthesis; CoA from (R)-pantothenate: step 5/5. Catalyzes the phosphorylation of the 3'-hydroxyl group of dephosphocoenzyme A to form coenzyme A. The polypeptide is Dephospho-CoA kinase (Sodalis glossinidius (strain morsitans)).